The sequence spans 226 residues: Biosynthetic peptidoglycan transglycosylase (226 aa).

A helical membrane pass occupies residues Val7–Gly29.

This sequence belongs to the glycosyltransferase 51 family.

It localises to the cell inner membrane. It catalyses the reaction [GlcNAc-(1-&gt;4)-Mur2Ac(oyl-L-Ala-gamma-D-Glu-L-Lys-D-Ala-D-Ala)](n)-di-trans,octa-cis-undecaprenyl diphosphate + beta-D-GlcNAc-(1-&gt;4)-Mur2Ac(oyl-L-Ala-gamma-D-Glu-L-Lys-D-Ala-D-Ala)-di-trans,octa-cis-undecaprenyl diphosphate = [GlcNAc-(1-&gt;4)-Mur2Ac(oyl-L-Ala-gamma-D-Glu-L-Lys-D-Ala-D-Ala)](n+1)-di-trans,octa-cis-undecaprenyl diphosphate + di-trans,octa-cis-undecaprenyl diphosphate + H(+). Its pathway is cell wall biogenesis; peptidoglycan biosynthesis. Peptidoglycan polymerase that catalyzes glycan chain elongation from lipid-linked precursors. The chain is Biosynthetic peptidoglycan transglycosylase from Nitrobacter winogradskyi (strain ATCC 25391 / DSM 10237 / CIP 104748 / NCIMB 11846 / Nb-255).